Reading from the N-terminus, the 166-residue chain is Urocortin-3 (166 aa).

Residues 1–23 (MLVPAPFLLVLLLLLGAPQVGLS) form the signal peptide. A propeptide spanning residues 24–123 (QRSPKAGSSP…QDKAKSDRRT (100 aa)) is cleaved from the precursor. The span at 41 to 51 (REAEKSQRKDT) shows a compositional bias: basic and acidic residues. The tract at residues 41–123 (REAEKSQRKD…QDKAKSDRRT (83 aa)) is disordered. Residues 68–77 (EDQEGQEEED) show a composition bias toward acidic residues. Over residues 86–96 (SVGGGGGGGAG) the composition is skewed to gly residues. Basic and acidic residues predominate over residues 113-123 (SQDKAKSDRRT). Ile-162 carries the post-translational modification Isoleucine amide.

This sequence belongs to the sauvagine/corticotropin-releasing factor/urotensin I family. As to quaternary structure, binds with high affinity to CRF receptors 2-alpha and 2-beta.

Its subcellular location is the secreted. Functionally, suppresses food intake, delays gastric emptying and decreases heat-induced edema. Might represent an endogenous ligand for maintaining homeostasis after stress. This Bos taurus (Bovine) protein is Urocortin-3 (UCN3).